The following is a 101-amino-acid chain: NAD(P)H-quinone oxidoreductase subunit 4L, chloroplastic (101 aa).

The next 3 membrane-spanning stretches (helical) occupy residues 2 to 22 (MLEHILVLSAYLFSIGIYGLI), 32 to 52 (MCLELIFNSVNINFVTFSGFF), and 61 to 81 (IFSVFVFAIAAAEAAIGLAIV).

This sequence belongs to the complex I subunit 4L family. In terms of assembly, NDH is composed of at least 16 different subunits, 5 of which are encoded in the nucleus.

It is found in the plastid. The protein resides in the chloroplast thylakoid membrane. It catalyses the reaction a plastoquinone + NADH + (n+1) H(+)(in) = a plastoquinol + NAD(+) + n H(+)(out). The catalysed reaction is a plastoquinone + NADPH + (n+1) H(+)(in) = a plastoquinol + NADP(+) + n H(+)(out). In terms of biological role, NDH shuttles electrons from NAD(P)H:plastoquinone, via FMN and iron-sulfur (Fe-S) centers, to quinones in the photosynthetic chain and possibly in a chloroplast respiratory chain. The immediate electron acceptor for the enzyme in this species is believed to be plastoquinone. Couples the redox reaction to proton translocation, and thus conserves the redox energy in a proton gradient. The polypeptide is NAD(P)H-quinone oxidoreductase subunit 4L, chloroplastic (Jasminum nudiflorum (Winter jasmine)).